We begin with the raw amino-acid sequence, 243 residues long: Cell division protein ZipA (243 aa).

The Periplasmic portion of the chain corresponds to 1–4 (MSDM). The helical transmembrane segment at 5 to 25 (AMIRIGILIAGLLLVAAIFLF) threads the bilayer. Over 26–243 (GRPKKSPQGR…APPLTKSPRW (218 aa)) the chain is Cytoplasmic. The segment at 30-89 (KSPQGRRVDKGEGQPRERREPVISSEFGAEGDAAERAEGVEQSELNLEGQDASGGNEVGK) is disordered. A compositionally biased stretch (basic and acidic residues) spans 35 to 50 (RRVDKGEGQPRERREP).

Belongs to the ZipA family. Interacts with FtsZ via their C-terminal domains.

Its subcellular location is the cell inner membrane. Functionally, essential cell division protein that stabilizes the FtsZ protofilaments by cross-linking them and that serves as a cytoplasmic membrane anchor for the Z ring. Also required for the recruitment to the septal ring of downstream cell division proteins. The protein is Cell division protein ZipA of Xanthomonas axonopodis pv. citri (strain 306).